The chain runs to 1034 residues: Isoleucine--tRNA ligase (1034 aa).

Positions 48–58 match the 'HIGH' region motif; sequence PTANGKPHIGH. Residues 588–592 carry the 'KMSKS' region motif; the sequence is KMSKH. Lys591 provides a ligand contact to ATP.

It belongs to the class-I aminoacyl-tRNA synthetase family. IleS type 2 subfamily. Monomer. The cofactor is Zn(2+).

The protein localises to the cytoplasm. It catalyses the reaction tRNA(Ile) + L-isoleucine + ATP = L-isoleucyl-tRNA(Ile) + AMP + diphosphate. Its function is as follows. Catalyzes the attachment of isoleucine to tRNA(Ile). As IleRS can inadvertently accommodate and process structurally similar amino acids such as valine, to avoid such errors it has two additional distinct tRNA(Ile)-dependent editing activities. One activity is designated as 'pretransfer' editing and involves the hydrolysis of activated Val-AMP. The other activity is designated 'posttransfer' editing and involves deacylation of mischarged Val-tRNA(Ile). This chain is Isoleucine--tRNA ligase, found in Clostridium kluyveri (strain ATCC 8527 / DSM 555 / NBRC 12016 / NCIMB 10680 / K1).